Consider the following 156-residue polypeptide: ATP synthase subunit b (156 aa).

The chain crosses the membrane as a helical span at residues 11–31 (AIAFVLFVLFCMKYVWPPIMA).

The protein belongs to the ATPase B chain family. F-type ATPases have 2 components, F(1) - the catalytic core - and F(0) - the membrane proton channel. F(1) has five subunits: alpha(3), beta(3), gamma(1), delta(1), epsilon(1). F(0) has three main subunits: a(1), b(2) and c(10-14). The alpha and beta chains form an alternating ring which encloses part of the gamma chain. F(1) is attached to F(0) by a central stalk formed by the gamma and epsilon chains, while a peripheral stalk is formed by the delta and b chains.

It localises to the cell inner membrane. In terms of biological role, f(1)F(0) ATP synthase produces ATP from ADP in the presence of a proton or sodium gradient. F-type ATPases consist of two structural domains, F(1) containing the extramembraneous catalytic core and F(0) containing the membrane proton channel, linked together by a central stalk and a peripheral stalk. During catalysis, ATP synthesis in the catalytic domain of F(1) is coupled via a rotary mechanism of the central stalk subunits to proton translocation. Component of the F(0) channel, it forms part of the peripheral stalk, linking F(1) to F(0). This Proteus mirabilis (strain HI4320) protein is ATP synthase subunit b.